The primary structure comprises 369 residues: Methionine import ATP-binding protein MetN 1 (369 aa).

Positions 1–26 (MTTMTVPPSLLPLEPFPTAPDTRAST) are disordered. Residues 29–265 (IRLHGLGKRY…PRHAVTRSLL (237 aa)) enclose the ABC transporter domain. 62 to 69 (GRSGAGKS) contributes to the ATP binding site.

It belongs to the ABC transporter superfamily. Methionine importer (TC 3.A.1.24) family. As to quaternary structure, the complex is composed of two ATP-binding proteins (MetN), two transmembrane proteins (MetI) and a solute-binding protein (MetQ).

The protein resides in the cell inner membrane. The catalysed reaction is L-methionine(out) + ATP + H2O = L-methionine(in) + ADP + phosphate + H(+). It catalyses the reaction D-methionine(out) + ATP + H2O = D-methionine(in) + ADP + phosphate + H(+). Part of the ABC transporter complex MetNIQ involved in methionine import. Responsible for energy coupling to the transport system. This is Methionine import ATP-binding protein MetN 1 from Pseudomonas aeruginosa (strain UCBPP-PA14).